The chain runs to 414 residues: Serine hydroxymethyltransferase (414 aa).

Residues Leu117 and 121–123 (GHL) each bind (6S)-5,6,7,8-tetrahydrofolate. Position 226 is an N6-(pyridoxal phosphate)lysine (Lys226). 349–351 (SPF) contributes to the (6S)-5,6,7,8-tetrahydrofolate binding site.

It belongs to the SHMT family. In terms of assembly, homodimer. The cofactor is pyridoxal 5'-phosphate.

It localises to the cytoplasm. It carries out the reaction (6R)-5,10-methylene-5,6,7,8-tetrahydrofolate + glycine + H2O = (6S)-5,6,7,8-tetrahydrofolate + L-serine. Its pathway is one-carbon metabolism; tetrahydrofolate interconversion. It participates in amino-acid biosynthesis; glycine biosynthesis; glycine from L-serine: step 1/1. Its function is as follows. Catalyzes the reversible interconversion of serine and glycine with tetrahydrofolate (THF) serving as the one-carbon carrier. Also exhibits THF-independent aldolase activity toward beta-hydroxyamino acids, producing glycine and aldehydes, via a retro-aldol mechanism. This is Serine hydroxymethyltransferase from Methanospirillum hungatei JF-1 (strain ATCC 27890 / DSM 864 / NBRC 100397 / JF-1).